The following is a 104-amino-acid chain: Thioredoxin (104 aa).

The Thioredoxin domain occupies 2–104 (AIVKVTDSDF…NLAEVLDKHL (103 aa)). An intrachain disulfide couples Cys29 to Cys32.

This sequence belongs to the thioredoxin family.

Component of the thioredoxin-thioredoxin reductase system. Participates in various redox reactions through the reversible oxidation of its active center dithiol to a disulfide and catalyzes dithiol-disulfide exchange reactions. This chain is Thioredoxin (trxA), found in Staphylococcus epidermidis (strain ATCC 35984 / DSM 28319 / BCRC 17069 / CCUG 31568 / BM 3577 / RP62A).